The sequence spans 503 residues: Cytochrome P450 11B1, mitochondrial (503 aa).

A mitochondrion-targeting transit peptide spans 1–24 (MALRAKAEVCMAAPWLSLQRARAL). Residue C450 participates in heme binding.

The protein belongs to the cytochrome P450 family. The cofactor is heme.

It is found in the mitochondrion inner membrane. It carries out the reaction a steroid + 2 reduced [adrenodoxin] + O2 + 2 H(+) = an 11beta-hydroxysteroid + 2 oxidized [adrenodoxin] + H2O. It catalyses the reaction 11-deoxycortisol + 2 reduced [adrenodoxin] + O2 + 2 H(+) = cortisol + 2 oxidized [adrenodoxin] + H2O. The catalysed reaction is 21-hydroxyprogesterone + 2 reduced [adrenodoxin] + O2 + 2 H(+) = corticosterone + 2 oxidized [adrenodoxin] + H2O. The enzyme catalyses 21-hydroxyprogesterone + 2 reduced [adrenodoxin] + O2 + 2 H(+) = 18-hydroxy-11-deoxycorticosterone + 2 oxidized [adrenodoxin] + H2O. It carries out the reaction 21-hydroxyprogesterone + 2 reduced [adrenodoxin] + O2 + 2 H(+) = 19-hydroxy-11-deoxycorticosterone + 2 oxidized [adrenodoxin] + H2O. It catalyses the reaction cortisol + 2 reduced [adrenodoxin] + O2 + 2 H(+) = 18-hydroxycortisol + 2 oxidized [adrenodoxin] + H2O. The catalysed reaction is 11-deoxycortisol + 2 reduced [adrenodoxin] + O2 + 2 H(+) = 18-hydroxy-11-deoxycortisol + 2 oxidized [adrenodoxin] + H2O. It functions in the pathway steroid biosynthesis; glucocorticoid biosynthesis. The protein operates within steroid hormone biosynthesis. A cytochrome P450 monooxygenase involved in the biosynthesis of adrenal corticoids. Catalyzes a variety of reactions that are essential for many species, including detoxification, defense, and the formation of endogenous chemicals like steroid hormones. Steroid 11beta, 18- and 19-hydroxylase with preferred regioselectivity at 11beta, then 18, and lastly 19. Catalyzes the hydroxylation of 11-deoxycortisol and 11-deoxycorticosterone (21-hydroxyprogesterone) at 11beta position, yielding cortisol or corticosterone, respectively, but cannot produce aldosterone. Mechanistically, uses molecular oxygen inserting one oxygen atom into a substrate for hydroxylation and reducing the second into a water molecule. Two electrons are provided by NADPH via a two-protein mitochondrial transfer system comprising flavoprotein FDXR (adrenodoxin/ferredoxin reductase) and nonheme iron-sulfur protein FDX1 or FDX2 (adrenodoxin/ferredoxin). Due to its lack of 18-oxidation activity, it is incapable of generating aldosterone. Could also be involved in the androgen metabolic pathway. The polypeptide is Cytochrome P450 11B1, mitochondrial (CYP11B1) (Papio hamadryas ursinus (Chacma baboon)).